The chain runs to 61 residues: DGYILNSKGCKVSCVVSIVYCNSMCKSSGGSYGYCWTWGLACWCEGLPNSKRWTSSKNKCN.

The 61-residue stretch at 1–61 (DGYILNSKGC…RWTSSKNKCN (61 aa)) folds into the LCN-type CS-alpha/beta domain. 4 disulfides stabilise this stretch: cysteine 10/cysteine 60, cysteine 14/cysteine 35, cysteine 21/cysteine 42, and cysteine 25/cysteine 44.

It belongs to the long (4 C-C) scorpion toxin superfamily. Sodium channel inhibitor family. Beta subfamily. As to expression, expressed by the venom gland.

It is found in the secreted. In terms of biological role, depressant insect beta-toxins cause a transient contraction paralysis followed by a slow flaccid paralysis. They bind voltage-independently at site-4 of sodium channels (Nav) and shift the voltage of activation toward more negative potentials thereby affecting sodium channel activation and promoting spontaneous and repetitive firing. This toxin is active only on insects. This is Insect toxin BsIT3 from Hottentotta tamulus sindicus (Scorpion).